Here is a 20-residue protein sequence, read N- to C-terminus: Hongotoxin-5 (20 aa).

Belongs to the short scorpion toxin superfamily. Potassium channel inhibitor family. Alpha-KTx 02 subfamily. As to expression, expressed by the venom gland.

It localises to the secreted. Its function is as follows. Potent selective inhibitor of Kv1/KCNA voltage-gated potassium channels. This is Hongotoxin-5 from Centruroides limbatus (Bark scorpion).